A 336-amino-acid polypeptide reads, in one-letter code: UDP-N-acetylglucosamine--N-acetylmuramyl-(pentapeptide) pyrophosphoryl-undecaprenol N-acetylglucosamine transferase (336 aa).

UDP-N-acetyl-alpha-D-glucosamine contacts are provided by Asn-102, Arg-144, Ser-172, and Gln-264.

This sequence belongs to the glycosyltransferase 28 family. MurG subfamily.

It is found in the cell membrane. It catalyses the reaction di-trans,octa-cis-undecaprenyl diphospho-N-acetyl-alpha-D-muramoyl-L-alanyl-D-glutamyl-meso-2,6-diaminopimeloyl-D-alanyl-D-alanine + UDP-N-acetyl-alpha-D-glucosamine = di-trans,octa-cis-undecaprenyl diphospho-[N-acetyl-alpha-D-glucosaminyl-(1-&gt;4)]-N-acetyl-alpha-D-muramoyl-L-alanyl-D-glutamyl-meso-2,6-diaminopimeloyl-D-alanyl-D-alanine + UDP + H(+). It functions in the pathway cell wall biogenesis; peptidoglycan biosynthesis. Functionally, cell wall formation. Catalyzes the transfer of a GlcNAc subunit on undecaprenyl-pyrophosphoryl-MurNAc-pentapeptide (lipid intermediate I) to form undecaprenyl-pyrophosphoryl-MurNAc-(pentapeptide)GlcNAc (lipid intermediate II). This chain is UDP-N-acetylglucosamine--N-acetylmuramyl-(pentapeptide) pyrophosphoryl-undecaprenol N-acetylglucosamine transferase, found in Rubrobacter xylanophilus (strain DSM 9941 / JCM 11954 / NBRC 16129 / PRD-1).